The sequence spans 118 residues: Melanoma antigen recognized by T-cells 1 (118 aa).

The chain crosses the membrane as a helical span at residues 27 to 47 (AAGIGILTVILGVLLLIGCWY). Residues 48 to 118 (CRRRNGYRAL…AEQSPPPYSP (71 aa)) are Cytoplasmic-facing. The segment at 78 to 118 (GFDHRDSKVSLQEKNCEPVVPNAPPAYEKLSAEQSPPPYSP) is disordered. Ser108 is subject to Phosphoserine.

As to quaternary structure, interacts with PMEL. Interacts with GPR143. In terms of processing, acylated. As to expression, expression is restricted to melanoma and melanocyte cell lines and retina.

It localises to the endoplasmic reticulum membrane. Its subcellular location is the golgi apparatus. The protein resides in the trans-Golgi network membrane. The protein localises to the melanosome. In terms of biological role, involved in melanosome biogenesis by ensuring the stability of GPR143. Plays a vital role in the expression, stability, trafficking, and processing of melanocyte protein PMEL, which is critical to the formation of stage II melanosomes. This Homo sapiens (Human) protein is Melanoma antigen recognized by T-cells 1 (MLANA).